Here is an 819-residue protein sequence, read N- to C-terminus: MNKAKNSGAVPQFVDNFEDFYNNGDDILNNKHKEEINFVKYRIFDTHLINYNNNNNNKNNNNNNNNNENTTITNKLNEIKEYLILNYIKDYIWQKEPFNLKIYDHKKKQQQQQQLPIHFYGNTKFEESIDDEWFIVYILLELTKKFQSLIVSIKDNDGEFILIETAQALPKWIKPTNSNNRVYLKNGEIHIIPLPSDPSQLDTIPYKMDTNTALSILSSSSNNIITKVSNEINEILKNRLKRFYNGEYFLKDQNQIKLAAIPIEIGYLLNQYPQLISDITTTFYNRDSDDMKTISTMKRFPMSRERDSFGNSGQLITTNIRFTRCLYAMLKLQQWNSPKNFHPQLPKPSHPTYDSRSLGVKIICGLEMVYNRSKRNSVSSYHRFNDDLNWLNYLKQLKSNNYFNDETIGSKLYKEKLLIAKNQYLKNNINNNNNNNNKEEESIYKLIDQVTNSKSVDEMIKILQESDKSKIESEDDWLNEENPDKFEDLITEFENDRQKQQQKQQQQQQQQQQNKEGKKEVKENNNNNNNNNNNNNNNNNNNNNNNNNNNNDSNLINDFSNQFKSMLSQLSSFDGVEFNEKSGNSKNKTKSSAYGNGGDDNISFDSNKFMDILKGFTDNNKYDDDYDDDDDDDDDMYQDIDNYEDSDDKDDDEDDENDEDDEDDGFEEYEDEDEDDDDEKEFQYVEFLKKSTIKQYMERMDQELNLKIIASSFELESTKLPKEFDDIEKSNNNNNNNINNNDKDVDEDDNENYKVNQKVDLNLNLVKNLLESLTEQQGFAGPASTLLKEMSDNNSKKREKKKTSSKKLIPKKGKVKENK.

Disordered stretches follow at residues 494 to 558, 578 to 603, 617 to 680, 725 to 749, and 778 to 819; these read ENDR…LIND, FNEK…DNIS, TDNN…DDEK, DDIE…DEDD, and GFAG…KENK. Low complexity-rich tracts occupy residues 501-514, 524-551, and 581-592; these read QQKQ…QQQN, NNNN…NNNN, and KSGNSKNKTKSS. Positions 624–680 are enriched in acidic residues; sequence DDYDDDDDDDDDMYQDIDNYEDSDDKDDDEDDENDEDDEDDGFEEYEDEDEDDDDEK. Residues 730 to 740 show a composition bias toward low complexity; sequence SNNNNNNNINN. Basic residues predominate over residues 797 to 819; it reads KREKKKTSSKKLIPKKGKVKENK.

This sequence belongs to the ECD family.

Functionally, may act as a transcriptional activator. The sequence is that of Protein ecdysoneless homolog (ecd) from Dictyostelium discoideum (Social amoeba).